The following is a 114-amino-acid chain: T cell receptor beta variable 6-1 (114 aa).

A signal peptide spans 1–21 (MSIGLLCCVAFSLLWASPVNA). Residues 22-114 (GVTQTPKFQV…TSVYFCASSE (93 aa)) form the Ig-like domain. Cysteine 42 and cysteine 110 form a disulfide bridge. An N-linked (GlcNAc...) asparagine glycan is attached at asparagine 84.

Alpha-beta TR is a heterodimer composed of an alpha and beta chain; disulfide-linked. The alpha-beta TR is associated with the transmembrane signaling CD3 coreceptor proteins to form the TR-CD3 (TcR or TCR). The assembly of alpha-beta TR heterodimers with CD3 occurs in the endoplasmic reticulum where a single alpha-beta TR heterodimer associates with one CD3D-CD3E heterodimer, one CD3G-CD3E heterodimer and one CD247 homodimer forming a stable octameric structure. CD3D-CD3E and CD3G-CD3E heterodimers preferentially associate with TR alpha and TR beta chains, respectively. The association of the CD247 homodimer is the last step of TcR assembly in the endoplasmic reticulum and is required for transport to the cell surface.

The protein localises to the cell membrane. In terms of biological role, v region of the variable domain of T cell receptor (TR) beta chain that participates in the antigen recognition. Alpha-beta T cell receptors are antigen specific receptors which are essential to the immune response and are present on the cell surface of T lymphocytes. Recognize peptide-major histocompatibility (MH) (pMH) complexes that are displayed by antigen presenting cells (APC), a prerequisite for efficient T cell adaptive immunity against pathogens. Binding of alpha-beta TR to pMH complex initiates TR-CD3 clustering on the cell surface and intracellular activation of LCK that phosphorylates the ITAM motifs of CD3G, CD3D, CD3E and CD247 enabling the recruitment of ZAP70. In turn ZAP70 phosphorylates LAT, which recruits numerous signaling molecules to form the LAT signalosome. The LAT signalosome propagates signal branching to three major signaling pathways, the calcium, the mitogen-activated protein kinase (MAPK) kinase and the nuclear factor NF-kappa-B (NF-kB) pathways, leading to the mobilization of transcription factors that are critical for gene expression and essential for T cell growth and differentiation. The T cell repertoire is generated in the thymus, by V-(D)-J rearrangement. This repertoire is then shaped by intrathymic selection events to generate a peripheral T cell pool of self-MH restricted, non-autoaggressive T cells. Post-thymic interaction of alpha-beta TR with the pMH complexes shapes TR structural and functional avidity. This is T cell receptor beta variable 6-1 from Homo sapiens (Human).